The chain runs to 183 residues: uncharacterized protein (183 aa).

Residues 1-23 (MGSSFVIDRSSSSPAPPRGPAPK) are disordered.

This is an uncharacterized protein from Saccharomyces cerevisiae (strain ATCC 204508 / S288c) (Baker's yeast).